Reading from the N-terminus, the 310-residue chain is uncharacterized protein (310 aa).

This sequence belongs to the YiaX1 family.

This is an uncharacterized protein from Salmonella typhimurium (strain LT2 / SGSC1412 / ATCC 700720).